The following is a 429-amino-acid chain: Adenylosuccinate synthetase (429 aa).

Residues 12-18 (GDEGKGK) and 40-42 (GHT) each bind GTP. The active-site Proton acceptor is Asp13. Asp13 and Gly40 together coordinate Mg(2+). IMP-binding positions include 13–16 (DEGK), 38–41 (NAGH), Thr128, Arg142, Gln223, Thr238, and Arg302. Residue His41 is the Proton donor of the active site. 298–304 (VNTGRKR) is a binding site for substrate. GTP is bound by residues Arg304, 330–332 (KLD), and 412–414 (GVG).

The protein belongs to the adenylosuccinate synthetase family. As to quaternary structure, homodimer. It depends on Mg(2+) as a cofactor.

The protein localises to the cytoplasm. It carries out the reaction IMP + L-aspartate + GTP = N(6)-(1,2-dicarboxyethyl)-AMP + GDP + phosphate + 2 H(+). Its pathway is purine metabolism; AMP biosynthesis via de novo pathway; AMP from IMP: step 1/2. In terms of biological role, plays an important role in the de novo pathway of purine nucleotide biosynthesis. Catalyzes the first committed step in the biosynthesis of AMP from IMP. This is Adenylosuccinate synthetase from Corynebacterium efficiens (strain DSM 44549 / YS-314 / AJ 12310 / JCM 11189 / NBRC 100395).